Reading from the N-terminus, the 190-residue chain is MGIKEDNWIRKMAIEEGMIEPFADNQVKVHPETGEKLISYGLSSYGYDLRISREFKVFTNIYNSLVDPKCFTEDALISIVDDVCIIPPNSFALARSVEYFRIPRNVLTVCIGKSTYARCGLIVNVTPFEPEWEGYVTIEISNTTPLPAKIYANEGIAQVLFFEGDSACDVSYADRQGKYQKQQGITVPFV.

113 to 118 (KSTYAR) is a dCTP binding site. Glutamate 139 serves as the catalytic Proton donor/acceptor. Residues glutamine 158, tyrosine 172, lysine 181, and glutamine 182 each contribute to the dCTP site.

This sequence belongs to the dCTP deaminase family. In terms of assembly, homotrimer.

The enzyme catalyses dCTP + H2O + H(+) = dUTP + NH4(+). It functions in the pathway pyrimidine metabolism; dUMP biosynthesis; dUMP from dCTP (dUTP route): step 1/2. In terms of biological role, catalyzes the deamination of dCTP to dUTP. This chain is dCTP deaminase, found in Chlamydia muridarum (strain MoPn / Nigg).